The following is a 57-amino-acid chain: Small ribosomal subunit protein bS21 (57 aa).

The disordered stretch occupies residues Glu-31–Phe-57. Over residues Arg-33–Phe-57 the composition is skewed to basic residues.

Belongs to the bacterial ribosomal protein bS21 family.

The chain is Small ribosomal subunit protein bS21 (rpsU) from Halalkalibacterium halodurans (strain ATCC BAA-125 / DSM 18197 / FERM 7344 / JCM 9153 / C-125) (Bacillus halodurans).